The following is a 149-amino-acid chain: Calmodulin (149 aa).

Ala-2 carries the post-translational modification N-acetylalanine. 4 consecutive EF-hand domains span residues 8–43 (EQIA…LGQN), 44–79 (PTEA…KMKD), 81–116 (DTEE…LGEK), and 117–149 (LTDE…MMAK). Asp-21, Asp-23, Asp-25, Thr-27, Glu-32, Asp-57, Asp-59, Asn-61, Thr-63, Glu-68, Asp-94, Asp-96, Asn-98, and Glu-105 together coordinate Ca(2+). Position 116 is an N6,N6,N6-trimethyllysine (Lys-116). Residues Asp-130, Asp-132, Asp-134, His-136, and Glu-141 each coordinate Ca(2+).

It belongs to the calmodulin family.

Calmodulin mediates the control of a large number of enzymes, ion channels and other proteins by Ca(2+). Among the enzymes to be stimulated by the calmodulin-Ca(2+) complex are a number of protein kinases and phosphatases. In Stylonychia lemnae (Ciliate), this protein is Calmodulin.